The chain runs to 239 residues: Endolytic peptidoglycan transglycosylase RlpA (239 aa).

An N-terminal signal peptide occupies residues 1–25 (MTLTRKTLFLLTAAFGTHSLQTASA). The region spanning 160-239 (VAENKDIFID…GMVRAVLTAG (80 aa)) is the SPOR domain.

It belongs to the RlpA family.

Functionally, lytic transglycosylase with a strong preference for naked glycan strands that lack stem peptides. This Neisseria meningitidis serogroup B (strain ATCC BAA-335 / MC58) protein is Endolytic peptidoglycan transglycosylase RlpA.